The sequence spans 180 residues: Hypoxanthine-guanine phosphoribosyltransferase (180 aa).

Residues Lys-40, 99 to 107 (EDIVDSGLT), Lys-131, and Asp-159 contribute to the GMP site. Asp-103 serves as the catalytic Proton acceptor. Asp-159 lines the Mg(2+) pocket.

It belongs to the purine/pyrimidine phosphoribosyltransferase family. Mg(2+) serves as cofactor.

It localises to the cytoplasm. The enzyme catalyses IMP + diphosphate = hypoxanthine + 5-phospho-alpha-D-ribose 1-diphosphate. The catalysed reaction is GMP + diphosphate = guanine + 5-phospho-alpha-D-ribose 1-diphosphate. It functions in the pathway purine metabolism; IMP biosynthesis via salvage pathway; IMP from hypoxanthine: step 1/1. Its function is as follows. Converts guanine to guanosine monophosphate, and hypoxanthine to inosine monophosphate. Transfers the 5-phosphoribosyl group from 5-phosphoribosylpyrophosphate onto the purine. Plays a central role in the generation of purine nucleotides through the purine salvage pathway. This chain is Hypoxanthine-guanine phosphoribosyltransferase (hprT), found in Dictyostelium discoideum (Social amoeba).